A 155-amino-acid chain; its full sequence is Medium/long-chain acyl-CoA thioesterase YigI (155 aa).

This sequence belongs to the YigI thioesterase family.

It localises to the cytoplasm. It catalyses the reaction a fatty acyl-CoA + H2O = a fatty acid + CoA + H(+). The catalysed reaction is a medium-chain fatty acyl-CoA + H2O = a medium-chain fatty acid + CoA + H(+). It carries out the reaction a long-chain fatty acyl-CoA + H2O = a long-chain fatty acid + CoA + H(+). Its function is as follows. Displays thioesterase activity against medium- to long-chain acyl-CoA substrates. Is involved in the thioesterase-dependent beta-oxidation pathway of (9Z,11E)-octadecadienoate (conjugated linoleic acid or CLA), along with TesB and FadM. The polypeptide is Medium/long-chain acyl-CoA thioesterase YigI (yigI) (Shigella flexneri).